Reading from the N-terminus, the 194-residue chain is Superoxide dismutase [Cu-Zn] (194 aa).

An N-terminal signal peptide occupies residues 1–20; sequence MTRPLALIIFLVAILTNTDP. Residues H85 and H104 each coordinate Cu cation. Cysteines 96 and 188 form a disulfide. H104, H112, H121, and D124 together coordinate Zn(2+). H162 lines the Cu cation pocket.

The protein belongs to the Cu-Zn superoxide dismutase family. As to quaternary structure, homodimer. Cu cation is required as a cofactor. It depends on Zn(2+) as a cofactor.

It catalyses the reaction 2 superoxide + 2 H(+) = H2O2 + O2. Destroys radicals which are normally produced within the cells and which are toxic to biological systems. This chain is Superoxide dismutase [Cu-Zn], found in Ramazzottius varieornatus (Water bear).